We begin with the raw amino-acid sequence, 111 residues long: Ig kappa chain V-III region PC 3741/TEPC 111 (111 aa).

The interval 1–23 (DIVLTQSPASLAVSLGQRATISC) is framework-1. Residues C23 and C92 are joined by a disulfide bond. Positions 24–38 (RASESVDSYGNSFMH) are complementarity-determining-1. Residues 39 to 53 (WYQQKPGQPPKLLIY) form a framework-2 region. The tract at residues 54–60 (RASNLES) is complementarity-determining-2. A framework-3 region spans residues 61–92 (GIPARFSGSGSRTDFTLTINPVEADDVATYYC). A complementarity-determining-3 region spans residues 93 to 101 (QQSNEDPYT). The framework-4 stretch occupies residues 102–111 (FGGGTKLEIK).

This is Ig kappa chain V-III region PC 3741/TEPC 111 from Mus musculus (Mouse).